Reading from the N-terminus, the 152-residue chain is Flagellar assembly factor FliW (152 aa).

It belongs to the FliW family. Interacts with translational regulator CsrA and flagellin(s).

The protein localises to the cytoplasm. Its function is as follows. Acts as an anti-CsrA protein, binds CsrA and prevents it from repressing translation of its target genes, one of which is flagellin. Binds to flagellin and participates in the assembly of the flagellum. This is Flagellar assembly factor FliW from Desulfitobacterium hafniense (strain Y51).